A 464-amino-acid polypeptide reads, in one-letter code: Fumarate hydratase class II (464 aa).

Substrate is bound by residues 97 to 99 (SGT), 128 to 131 (HPND), 138 to 140 (SSN), and threonine 186. Histidine 187 acts as the Proton donor/acceptor in catalysis. The active site involves serine 317. Substrate is bound by residues serine 318 and 323–325 (KVN).

This sequence belongs to the class-II fumarase/aspartase family. Fumarase subfamily. As to quaternary structure, homotetramer.

Its subcellular location is the cytoplasm. It carries out the reaction (S)-malate = fumarate + H2O. It participates in carbohydrate metabolism; tricarboxylic acid cycle; (S)-malate from fumarate: step 1/1. Its function is as follows. Involved in the TCA cycle. Catalyzes the stereospecific interconversion of fumarate to L-malate. This is Fumarate hydratase class II from Leptospira interrogans serogroup Icterohaemorrhagiae serovar copenhageni (strain Fiocruz L1-130).